The following is an 854-amino-acid chain: Protein translocase subunit SecA (854 aa).

Residues glutamine 89, 107–111 (GEGKT), and aspartate 501 contribute to the ATP site.

This sequence belongs to the SecA family. As to quaternary structure, monomer and homodimer. Part of the essential Sec protein translocation apparatus which comprises SecA, SecYEG and auxiliary proteins SecDF-YajC and YidC.

The protein localises to the cell inner membrane. The protein resides in the cytoplasm. It carries out the reaction ATP + H2O + cellular proteinSide 1 = ADP + phosphate + cellular proteinSide 2.. In terms of biological role, part of the Sec protein translocase complex. Interacts with the SecYEG preprotein conducting channel. Has a central role in coupling the hydrolysis of ATP to the transfer of proteins into and across the cell membrane, serving both as a receptor for the preprotein-SecB complex and as an ATP-driven molecular motor driving the stepwise translocation of polypeptide chains across the membrane. The polypeptide is Protein translocase subunit SecA (Pelagibacter ubique (strain HTCC1062)).